The primary structure comprises 172 residues: Shikimate kinase (172 aa).

14–19 (GAGKST) lines the ATP pocket. A Mg(2+)-binding site is contributed by S18. D36, R60, and G82 together coordinate substrate. Position 120 (R120) interacts with ATP. R139 provides a ligand contact to substrate. Q156 is a binding site for ATP.

This sequence belongs to the shikimate kinase family. As to quaternary structure, monomer. Mg(2+) is required as a cofactor.

It localises to the cytoplasm. It catalyses the reaction shikimate + ATP = 3-phosphoshikimate + ADP + H(+). It participates in metabolic intermediate biosynthesis; chorismate biosynthesis; chorismate from D-erythrose 4-phosphate and phosphoenolpyruvate: step 5/7. In terms of biological role, catalyzes the specific phosphorylation of the 3-hydroxyl group of shikimic acid using ATP as a cosubstrate. The chain is Shikimate kinase from Vibrio vulnificus (strain CMCP6).